A 146-amino-acid chain; its full sequence is 3-dehydroquinate dehydratase (146 aa).

Tyrosine 22 serves as the catalytic Proton acceptor. Residues asparagine 73, histidine 79, and aspartate 86 each contribute to the substrate site. Histidine 99 functions as the Proton donor in the catalytic mechanism. Substrate is bound by residues 100 to 101 (VS) and arginine 110.

It belongs to the type-II 3-dehydroquinase family. Homododecamer.

It catalyses the reaction 3-dehydroquinate = 3-dehydroshikimate + H2O. Its pathway is metabolic intermediate biosynthesis; chorismate biosynthesis; chorismate from D-erythrose 4-phosphate and phosphoenolpyruvate: step 3/7. In terms of biological role, catalyzes a trans-dehydration via an enolate intermediate. In Kineococcus radiotolerans (strain ATCC BAA-149 / DSM 14245 / SRS30216), this protein is 3-dehydroquinate dehydratase.